Reading from the N-terminus, the 472-residue chain is Adenosylhomocysteinase (472 aa).

Positions 62, 137, and 197 each coordinate substrate. 198-200 is an NAD(+) binding site; that stretch reads TTT. Lys-227 and Asp-231 together coordinate substrate. NAD(+) contacts are provided by residues Asn-232, 261–266, Glu-284, Asn-319, 340–342, and Asn-385; these read GYGDVG and IGH.

This sequence belongs to the adenosylhomocysteinase family. It depends on NAD(+) as a cofactor.

The protein localises to the cytoplasm. It carries out the reaction S-adenosyl-L-homocysteine + H2O = L-homocysteine + adenosine. It functions in the pathway amino-acid biosynthesis; L-homocysteine biosynthesis; L-homocysteine from S-adenosyl-L-homocysteine: step 1/1. May play a key role in the regulation of the intracellular concentration of adenosylhomocysteine. This chain is Adenosylhomocysteinase, found in Bordetella petrii (strain ATCC BAA-461 / DSM 12804 / CCUG 43448).